The primary structure comprises 67 residues: Large ribosomal subunit protein bL35 (67 aa).

Belongs to the bacterial ribosomal protein bL35 family.

This chain is Large ribosomal subunit protein bL35, found in Mesorhizobium japonicum (strain LMG 29417 / CECT 9101 / MAFF 303099) (Mesorhizobium loti (strain MAFF 303099)).